Here is a 340-residue protein sequence, read N- to C-terminus: Ketol-acid reductoisomerase (NADP(+)) (340 aa).

In terms of domain architecture, KARI N-terminal Rossmann spans 3–182; sequence VQMEYEKDVK…GAARVGLLET (180 aa). Residues 26–29, Arg49, Ser53, and 83–86 each bind NADP(+); these read YGSQ and DEIQ. His108 is an active-site residue. NADP(+) is bound at residue Gly134. Residues 183-328 enclose the KARI C-terminal knotted domain; sequence TYKEETEEDL…AELRKAMPFV (146 aa). The Mg(2+) site is built by Asp191, Glu195, Glu227, and Glu231. Ser252 lines the substrate pocket.

Belongs to the ketol-acid reductoisomerase family. The cofactor is Mg(2+).

It carries out the reaction (2R)-2,3-dihydroxy-3-methylbutanoate + NADP(+) = (2S)-2-acetolactate + NADPH + H(+). It catalyses the reaction (2R,3R)-2,3-dihydroxy-3-methylpentanoate + NADP(+) = (S)-2-ethyl-2-hydroxy-3-oxobutanoate + NADPH + H(+). It participates in amino-acid biosynthesis; L-isoleucine biosynthesis; L-isoleucine from 2-oxobutanoate: step 2/4. The protein operates within amino-acid biosynthesis; L-valine biosynthesis; L-valine from pyruvate: step 2/4. Functionally, involved in the biosynthesis of branched-chain amino acids (BCAA). Catalyzes an alkyl-migration followed by a ketol-acid reduction of (S)-2-acetolactate (S2AL) to yield (R)-2,3-dihydroxy-isovalerate. In the isomerase reaction, S2AL is rearranged via a Mg-dependent methyl migration to produce 3-hydroxy-3-methyl-2-ketobutyrate (HMKB). In the reductase reaction, this 2-ketoacid undergoes a metal-dependent reduction by NADPH to yield (R)-2,3-dihydroxy-isovalerate. This Streptococcus thermophilus (strain CNRZ 1066) protein is Ketol-acid reductoisomerase (NADP(+)).